A 377-amino-acid polypeptide reads, in one-letter code: Spermidine/putrescine import ATP-binding protein PotA (377 aa).

Positions 22–252 (VRLQNVTKRF…PANRFVADFI (231 aa)) constitute an ABC transporter domain. 54-61 (GPSGCGKT) serves as a coordination point for ATP.

Belongs to the ABC transporter superfamily. Spermidine/putrescine importer (TC 3.A.1.11.1) family. The complex is composed of two ATP-binding proteins (PotA), two transmembrane proteins (PotB and PotC) and a solute-binding protein (PotD).

It is found in the cell membrane. It carries out the reaction ATP + H2O + polyamine-[polyamine-binding protein]Side 1 = ADP + phosphate + polyamineSide 2 + [polyamine-binding protein]Side 1.. In terms of biological role, part of the ABC transporter complex PotABCD involved in spermidine/putrescine import. Responsible for energy coupling to the transport system. The sequence is that of Spermidine/putrescine import ATP-binding protein PotA from Rubrobacter xylanophilus (strain DSM 9941 / JCM 11954 / NBRC 16129 / PRD-1).